A 326-amino-acid polypeptide reads, in one-letter code: Glutaminase 2 (326 aa).

Substrate is bound by residues S73, N125, E169, N176, Y200, Y252, and V270.

It belongs to the glutaminase family. As to quaternary structure, homotetramer.

It catalyses the reaction L-glutamine + H2O = L-glutamate + NH4(+). In Bacillus anthracis, this protein is Glutaminase 2.